The following is a 651-amino-acid chain: MSTLLPFPDLNLMPDSQSSTAGTTAGDTVVTGKLEVKSEPIEEWQTPPSSTSDQSANTDLIAEFIRISELFRSAFKPLQVKGLDGVSVYGLDSGAIVAVPEKENRELIEPPPGFKDNRVSTVVVSPKFERPRELARIAILGHEQRKELRQVMKRTRMTYESLRIHLMAESMKNHVLGQGRRRRSDMAAAYIMRDRGLWLNYDKHIVGPVTGVEVGDIFFYRMELCVLGLHGQTQAGIDCLTAERSATGEPIATSIVVSGGYEDDEDTGDVLVYTGHGGQDHQHKQCDNQRLVGGNLGMERSMHYGIEVRVIRGIKYENSISSKVYVYDGLYKIVDWWFAVGKSGFGVFKFRLVRIEGQPMMGSAVMRFAQTLRNKPSMVRPTGYVSFDLSNKKENVPVFLYNDVDGDQEPRHYEYIAKAVFPPGIFGQGGISRTGCECKLSCTDDCLCARKNGGEFAYDDNGHLLKGKHVVFECGEFCTCGPSCKSRVTQKGLRNRLEVFRSKETGWGVRTLDLIEAGAFICEYAGVVVTRLQAEILSMNGDVMVYPGRFTDQWRNWGDLSQVYPDFVRPNYPSLPPLDFSMDVSRMRNVACYISHSKEPNVMVQFVLHDHNHLMFPRVMLFALENISPLAELSLDYGLADEVNGKLAICN.

The segment at 1–28 is disordered; sequence MSTLLPFPDLNLMPDSQSSTAGTTAGDT. A compositionally biased stretch (low complexity) spans 15–28; that stretch reads DSQSSTAGTTAGDT. The YDG domain occupies 202–358; the sequence is DKHIVGPVTG…KFRLVRIEGQ (157 aa). Positions 434–492 constitute a Pre-SET domain; the sequence is TGCECKLSCTDDCLCARKNGGEFAYDDNGHLLKGKHVVFECGEFCTCGPSCKSRVTQKG. Cysteine 436, cysteine 438, cysteine 442, cysteine 446, cysteine 448, cysteine 474, cysteine 478, cysteine 480, and cysteine 484 together coordinate Zn(2+). Residues 495 to 638 form the SET domain; it reads NRLEVFRSKE…PLAELSLDYG (144 aa).

The protein belongs to the class V-like SAM-binding methyltransferase superfamily. Histone-lysine methyltransferase family. Suvar3-9 subfamily. As to quaternary structure, self-interacts. Interacts with DNA-directed RNA polymerase V subunit NRPE1 and with DRD1 and DMS3. Binds to MORC1/CRT1. As to expression, expressed at low levels in leaves stems and flowers.

It is found in the nucleus. The protein localises to the chromosome. Its subcellular location is the centromere. In terms of biological role, histone methyltransferase family member that plays a central role in gene silencing. Together with MORC6 and SUVH9, regulates the silencing of some transposable elements (TEs). According to PubMed:15775980, it is required for normal methylation of 'Lys-9' and 'Lys-27' of histone H3, 'Lys-20' of H4, and cytosine, but PubMed:19043555 see no significant effect on histone methylation when the gene is mutated. According to PubMed:19043555, the protein does not bind S-adenosyl-L-methionine and lacks methyltransferase activity. Instead, it may function downstream of DRM2 in RNA-directed DNA methylation, binding to methylated DNA and recruiting DNA-directed RNA polymerase V to chromatin. This Arabidopsis thaliana (Mouse-ear cress) protein is Histone-lysine N-methyltransferase family member SUVH2 (SUVH2).